Reading from the N-terminus, the 629-residue chain is Dual specificity tyrosine-phosphorylation-regulated kinase 1B (629 aa).

A Phosphotyrosine modification is found at Tyr63. Residues 67-86 (KKRRAQQAPPQDSSTKKEKK) form a disordered region. The short motif at 69–86 (RRAQQAPPQDSSTKKEKK) is the Bipartite nuclear localization signal element. Phosphotyrosine occurs at positions 92 and 111. The region spanning 111-431 (YEIDSLIGKG…PLGALQHGFF (321 aa)) is the Protein kinase domain. 117-125 (IGKGSFGQV) provides a ligand contact to ATP. Tyr129 carries the phosphotyrosine modification. Residue Lys140 participates in ATP binding. Phosphotyrosine is present on Tyr171. ATP is bound at residue 190-193 (FELL). The Proton acceptor role is filled by Asp239. Ser262 carries the post-translational modification Phosphoserine. Position 271 is a phosphotyrosine; by autocatalysis (Tyr271). Tyr273 bears the Phosphotyrosine mark. The interval 380-399 (GVQTGGPGGRRAGEPGHSPA) is disordered. Tyr401 is modified (phosphotyrosine). Disordered regions lie at residues 436–480 (DEAT…SNDN) and 496–629 (PITD…AASS). Over residues 438-477 (ATNTGPAGSSASTSPAPLDTCPSSSTASSISSSGGSSGSS) the composition is skewed to low complexity. The interaction with RANBP9 stretch occupies residues 480 to 520 (NRAYRYSNRYCGGPGPPITDCEMNSPQVLPSQPLRPWAGGD). 2 stretches are compositionally biased toward pro residues: residues 552 to 562 (PPSPTSPPPPE) and 574 to 585 (DCSPPPPAPAPQ). Phosphoserine is present on Ser624.

Belongs to the protein kinase superfamily. CMGC Ser/Thr protein kinase family. MNB/DYRK subfamily. As to quaternary structure, dimer. Interacts with DCOHM, MAP2K3/MKK3, RANBP9 and TCF1/HNF1A. Part of a complex consisting of RANBP9, RAN, DYRK1B and COPS5. Interacts with DCAF7. Interacts with RNF169. Phosphorylated by MAP kinase. Tyrosine phosphorylation may be required for dimerization. As to expression, isoform 1 and isoform 2 are broadly expressed. Isoform 3 seems specific for skeletal muscle (at protein level).

It localises to the nucleus. The protein resides in the nucleolus. The protein localises to the chromosome. It carries out the reaction L-seryl-[protein] + ATP = O-phospho-L-seryl-[protein] + ADP + H(+). The enzyme catalyses L-threonyl-[protein] + ATP = O-phospho-L-threonyl-[protein] + ADP + H(+). It catalyses the reaction L-tyrosyl-[protein] + ATP = O-phospho-L-tyrosyl-[protein] + ADP + H(+). Inhibited by RANBP9. Its function is as follows. Dual-specificity kinase which possesses both serine/threonine and tyrosine kinase activities. Plays an essential role in ribosomal DNA (rDNA) double-strand break repair and rDNA copy number maintenance. During DNA damage, mediates transcription silencing in part via phosphorylating and enforcing DSB accumulation of the histone methyltransferase EHMT2. Enhances the transcriptional activity of TCF1/HNF1A and FOXO1. Inhibits epithelial cell migration. Mediates colon carcinoma cell survival in mitogen-poor environments. Inhibits the SHH and WNT1 pathways, thereby enhancing adipogenesis. In addition, promotes expression of the gluconeogenic enzyme glucose-6-phosphatase catalytic subunit 1 (G6PC1). This chain is Dual specificity tyrosine-phosphorylation-regulated kinase 1B (Dyrk1b), found in Mus musculus (Mouse).